We begin with the raw amino-acid sequence, 217 residues long: Large ribosomal subunit protein uL3 (217 aa).

Glutamine 152 is subject to N5-methylglutamine.

This sequence belongs to the universal ribosomal protein uL3 family. Part of the 50S ribosomal subunit. Forms a cluster with proteins L14 and L19. In terms of processing, methylated by PrmB.

In terms of biological role, one of the primary rRNA binding proteins, it binds directly near the 3'-end of the 23S rRNA, where it nucleates assembly of the 50S subunit. The sequence is that of Large ribosomal subunit protein uL3 from Blochmanniella pennsylvanica (strain BPEN).